The primary structure comprises 118 residues: Large ribosomal subunit protein bL20c (118 aa).

It belongs to the bacterial ribosomal protein bL20 family.

The protein resides in the plastid. It is found in the chloroplast. Binds directly to 23S ribosomal RNA and is necessary for the in vitro assembly process of the 50S ribosomal subunit. It is not involved in the protein synthesizing functions of that subunit. The polypeptide is Large ribosomal subunit protein bL20c (Adiantum capillus-veneris (Maidenhair fern)).